The sequence spans 183 residues: MRQRGFTVLEMMLVVLLMGSAASLVIMSFPAMQQDTAERQLQRFQAQLEFAMDSGMQNDRLLGIQIRPNGWQFQVLQSQAAETRSSVAHSDRWQGYVWQIWQPRQAALGGQVPDNQPLTLRLPPPQEWPPTAEPAADPDILLLPGGEITPFTLIFGEKDDRSEVWLRVDESGAIATSAKGGAP.

A propeptide spans 1-5 (leader sequence); that stretch reads MRQRG. The residue at position 6 (Phe6) is an N-methylphenylalanine. Residues 6 to 26 form a helical membrane-spanning segment; sequence FTVLEMMLVVLLMGSAASLVI.

In terms of assembly, type II secretion is composed of four main components: the outer membrane complex, the inner membrane complex, the cytoplasmic secretion ATPase and the periplasm-spanning pseudopilus. Interacts with core component PulG. Interacts with PulM. Cleaved by prepilin peptidase. Post-translationally, methylated by prepilin peptidase at the amino group of the N-terminal phenylalanine once the leader sequence is cleaved by prepilin peptidase.

The protein localises to the cell inner membrane. Its function is as follows. Component of the type II secretion system required for the energy-dependent secretion of extracellular factors such as proteases and toxins from the periplasm. Part of the pseudopilus tip complex that is critical for the recognition and binding of secretion substrates. The protein is Type II secretion system protein H (pulH) of Klebsiella michiganensis (strain ATCC 8724 / DSM 4798 / JCM 20051 / NBRC 3318 / NRRL B-199 / KCTC 1686 / BUCSAV 143 / CCM 1901).